Reading from the N-terminus, the 493-residue chain is tRNA(Ile)-lysidine synthase (493 aa).

26 to 31 is a binding site for ATP; that stretch reads SGGSDS.

Belongs to the tRNA(Ile)-lysidine synthase family.

It is found in the cytoplasm. It catalyses the reaction cytidine(34) in tRNA(Ile2) + L-lysine + ATP = lysidine(34) in tRNA(Ile2) + AMP + diphosphate + H(+). Functionally, ligates lysine onto the cytidine present at position 34 of the AUA codon-specific tRNA(Ile) that contains the anticodon CAU, in an ATP-dependent manner. Cytidine is converted to lysidine, thus changing the amino acid specificity of the tRNA from methionine to isoleucine. The chain is tRNA(Ile)-lysidine synthase from Bartonella henselae (strain ATCC 49882 / DSM 28221 / CCUG 30454 / Houston 1) (Rochalimaea henselae).